The following is a 424-amino-acid chain: Cyclin-dependent kinase D-1 (424 aa).

The Protein kinase domain occupies 19–299 (YLKREVLGEG…AQQALEHRYF (281 aa)). ATP-binding positions include 25 to 33 (LGEGTYGVV) and Lys48. Residue Thr29 is modified to Phosphothreonine. Tyr30 carries the phosphotyrosine modification. The active-site Proton acceptor is Asp141. Phosphoserine is present on Ser168. Position 174 is a phosphothreonine (Thr174). Disordered stretches follow at residues 303-337 (PAPT…PVVL) and 359-424 (ADRT…GYTE). Residues 359–374 (ADRTEEHPSGARHMDD) show a composition bias toward basic and acidic residues.

Belongs to the protein kinase superfamily. CMGC Ser/Thr protein kinase family. CDC2/CDKX subfamily.

The protein localises to the nucleus. The catalysed reaction is L-seryl-[protein] + ATP = O-phospho-L-seryl-[protein] + ADP + H(+). It carries out the reaction L-threonyl-[protein] + ATP = O-phospho-L-threonyl-[protein] + ADP + H(+). It catalyses the reaction [DNA-directed RNA polymerase] + ATP = phospho-[DNA-directed RNA polymerase] + ADP + H(+). The chain is Cyclin-dependent kinase D-1 (CDKD-1) from Oryza sativa subsp. indica (Rice).